A 2443-amino-acid polypeptide reads, in one-letter code: Spatacsin (2443 aa).

At Ser1955 the chain carries Phosphoserine.

In terms of assembly, interacts with AP5Z1, AP5B1, AP5S1 and ZFYVE26. In terms of tissue distribution, expressed in all structures of brain, with a high expression in cerebellum. Expressed in cortical projection neurons.

The protein localises to the cytoplasm. It localises to the cytosol. The protein resides in the nucleus. It is found in the cell projection. Its subcellular location is the axon. The protein localises to the dendrite. In terms of biological role, may play a role in neurite plasticity by maintaining cytoskeleton stability and regulating synaptic vesicle transport. The sequence is that of Spatacsin (SPG11) from Homo sapiens (Human).